We begin with the raw amino-acid sequence, 137 residues long: Histone H2B.1, sperm (137 aa).

The interval 1 to 43 (MPSQKSPTKRSPTKRSPQKGGKGAKRGGKAGKRRRGVAVKRRR) is disordered. 3 short sequence motifs (SPKK motif) span residues 6 to 9 (SPTK), 11 to 14 (SPTK), and 16 to 19 (SPQK). Residues 7–43 (PTKRSPTKRSPQKGGKGAKRGGKAGKRRRGVAVKRRR) show a composition bias toward basic residues. 2 positions are modified to phosphoserine: Ser11 and Ser16. An O-linked (GlcNAc) serine glycan is attached at Ser124. Lys132 is covalently cross-linked (Glycyl lysine isopeptide (Lys-Gly) (interchain with G-Cter in ubiquitin)).

Belongs to the histone H2B family. In terms of assembly, the nucleosome is a histone octamer containing two molecules each of H2A, H2B, H3 and H4 assembled in one H3-H4 heterotetramer and two H2A-H2B heterodimers. The octamer wraps approximately 147 bp of DNA. Monoubiquitination of Lys-132 gives a specific tag for epigenetic transcriptional activation and is also prerequisite for histone H3 'Lys-4' and 'Lys-79' methylation. Post-translationally, phosphorylated on SPKK motifs 2 and 3; which may regulate DNA binding. Dephosphorylated during maturation of spermatids to mature sperm and rephosphorylated at fertilization. In terms of processing, glcNAcylation at Ser-124 promotes monoubiquitination of Lys-132. It fluctuates in response to extracellular glucose, and associates with transcribed genes.

It localises to the nucleus. It is found in the chromosome. Functionally, core component of nucleosome. Nucleosomes wrap and compact DNA into chromatin, limiting DNA accessibility to the cellular machineries which require DNA as a template. Histones thereby play a central role in transcription regulation, DNA repair, DNA replication and chromosomal stability. DNA accessibility is regulated via a complex set of post-translational modifications of histones, also called histone code, and nucleosome remodeling. The sequence is that of Histone H2B.1, sperm from Psammechinus miliaris (Green sea urchin).